The primary structure comprises 234 residues: 2-hydroxy-3-keto-5-methylthiopentenyl-1-phosphate phosphatase (234 aa).

Belongs to the HAD-like hydrolase superfamily. MtnX family.

It catalyses the reaction 2-hydroxy-5-methylsulfanyl-3-oxopent-1-enyl phosphate + H2O = 1,2-dihydroxy-5-(methylsulfanyl)pent-1-en-3-one + phosphate. It functions in the pathway amino-acid biosynthesis; L-methionine biosynthesis via salvage pathway; L-methionine from S-methyl-5-thio-alpha-D-ribose 1-phosphate: step 4/6. Functionally, dephosphorylates 2-hydroxy-3-keto-5-methylthiopentenyl-1-phosphate (HK-MTPenyl-1-P) yielding 1,2-dihydroxy-3-keto-5-methylthiopentene (DHK-MTPene). This is 2-hydroxy-3-keto-5-methylthiopentenyl-1-phosphate phosphatase from Bacillus velezensis (strain DSM 23117 / BGSC 10A6 / LMG 26770 / FZB42) (Bacillus amyloliquefaciens subsp. plantarum).